The primary structure comprises 244 residues: Rho-related GTP-binding protein RhoE (244 aa).

30–37 (GDSQCGRT) contacts GTP. The short motif at 52–60 (YVPTVFENY) is the Effector region element. GTP contacts are provided by residues 77–81 (DTSGS) and 135–138 (CKSD). A Cysteine methyl ester modification is found at C241. C241 is lipidated: S-farnesyl cysteine. The propeptide at 242–244 (TVM) is removed in mature form.

This sequence belongs to the small GTPase superfamily. Rho family. Binds ROCK1. Interacts with UBXD5.

The protein resides in the cell membrane. Its function is as follows. Binds GTP but lacks intrinsic GTPase activity and is resistant to Rho-specific GTPase-activating proteins. This Sus scrofa (Pig) protein is Rho-related GTP-binding protein RhoE (RND3).